Consider the following 305-residue polypeptide: Virulence plasmid integrase pGP7-D (305 aa).

One can recognise a Core-binding (CB) domain in the interval 13–99 (LTFGDASEIW…CYISFTKFLY (87 aa)). In terms of domain architecture, Tyr recombinase spans 127–305 (IKTESISKQE…SPLVQTPPIL (179 aa)). Catalysis depends on residues lysine 188 and arginine 257. Catalysis depends on tyrosine 289, which acts as the O-(3'-phospho-DNA)-tyrosine intermediate.

Belongs to the 'phage' integrase family.

The sequence is that of Virulence plasmid integrase pGP7-D from Chlamydia trachomatis serovar L2 (strain ATCC VR-902B / DSM 19102 / 434/Bu).